Consider the following 185-residue polypeptide: Signal peptidase complex subunit 3 (185 aa).

Residues 1-12 (MIVDTFTNRGST) are Cytoplasmic-facing. A helical; Signal-anchor for type II membrane protein transmembrane segment spans residues 13-34 (FFSKLSTVLFFLCAVITFQGVI). Over 35–185 (QRREVELDTP…PFHKIITQPK (151 aa)) the chain is Lumenal. The N-linked (GlcNAc...) asparagine glycan is linked to Asn-148.

This sequence belongs to the SPCS3 family. Component of the signal peptidase complex (SPC) composed of a catalytic subunit sec11 and three accessory subunits spc1, spc2 and spc3. The complex induces a local thinning of the ER membrane which is used to measure the length of the signal peptide (SP) h-region of protein substrates. This ensures the selectivity of the complex towards h-regions shorter than 18-20 amino acids. SPC associates with the translocon complex.

It is found in the endoplasmic reticulum membrane. In terms of biological role, essential component of the signal peptidase complex (SPC) which catalyzes the cleavage of N-terminal signal sequences from nascent proteins as they are translocated into the lumen of the endoplasmic reticulum. Essential for the SPC catalytic activity, possibly by stabilizing and positioning the active center of the complex close to the lumenal surface. Essential for viability. The chain is Signal peptidase complex subunit 3 (spc3) from Schizosaccharomyces pombe (strain 972 / ATCC 24843) (Fission yeast).